The primary structure comprises 324 residues: Putative 12-oxophytodienoate reductase-like protein 1 (324 aa).

The residue at position 1 (Met-1) is an N-acetylmethionine. FMN is bound by residues 14–16 (PMA), Ala-47, and Gln-89. The span at 99–113 (QDCQPNGESPVSSTD) shows a compositional bias: polar residues. Residues 99–128 (QDCQPNGESPVSSTDKPFADDPSNEFTPPR) form a disordered region. 160-163 (HGAH) contributes to the substrate binding site. Tyr-165 functions as the Proton donor in the catalytic mechanism. Arg-212 lines the FMN pocket. Arg-252 lines the substrate pocket. Residues Gly-282 and 303–304 (GR) contribute to the FMN site.

It belongs to the NADH:flavin oxidoreductase/NADH oxidase family. It depends on FMN as a cofactor.

Functionally, putative oxophytodienoate reductase that may be involved in the biosynthesis or metabolism of oxylipin signaling molecules. The polypeptide is Putative 12-oxophytodienoate reductase-like protein 1 (Arabidopsis thaliana (Mouse-ear cress)).